A 328-amino-acid polypeptide reads, in one-letter code: Malate dehydrogenase (328 aa).

13 to 19 (GGTGQIA) is a binding site for NAD(+). Substrate-binding residues include R94 and R100. NAD(+) is bound by residues N107, Q114, and 131–133 (VGN). Residues N133 and R164 each contribute to the substrate site. H189 serves as the catalytic Proton acceptor.

The protein belongs to the LDH/MDH superfamily. MDH type 2 family.

It catalyses the reaction (S)-malate + NAD(+) = oxaloacetate + NADH + H(+). Functionally, catalyzes the reversible oxidation of malate to oxaloacetate. This Chlamydia felis (strain Fe/C-56) (Chlamydophila felis) protein is Malate dehydrogenase.